We begin with the raw amino-acid sequence, 239 residues long: Purine nucleoside phosphorylase DeoD-type (239 aa).

Histidine 5 is an a purine D-ribonucleoside binding site. Residues glycine 21, arginine 25, arginine 44, and 88–91 (RVGS) each bind phosphate. A purine D-ribonucleoside contacts are provided by residues 180–182 (EME) and 204–205 (SD). Residue aspartate 205 is the Proton donor of the active site.

This sequence belongs to the PNP/UDP phosphorylase family. Homohexamer; trimer of homodimers.

It catalyses the reaction a purine D-ribonucleoside + phosphate = a purine nucleobase + alpha-D-ribose 1-phosphate. It carries out the reaction a purine 2'-deoxy-D-ribonucleoside + phosphate = a purine nucleobase + 2-deoxy-alpha-D-ribose 1-phosphate. Catalyzes the reversible phosphorolytic breakdown of the N-glycosidic bond in the beta-(deoxy)ribonucleoside molecules, with the formation of the corresponding free purine bases and pentose-1-phosphate. This chain is Purine nucleoside phosphorylase DeoD-type, found in Salmonella heidelberg (strain SL476).